The chain runs to 140 residues: Nucleoside diphosphate kinase (140 aa).

Positions 11, 59, 87, 93, 104, and 114 each coordinate ATP. H117 functions as the Pros-phosphohistidine intermediate in the catalytic mechanism.

It belongs to the NDK family. As to quaternary structure, homotetramer. Mg(2+) is required as a cofactor.

The protein localises to the cytoplasm. The enzyme catalyses a 2'-deoxyribonucleoside 5'-diphosphate + ATP = a 2'-deoxyribonucleoside 5'-triphosphate + ADP. It catalyses the reaction a ribonucleoside 5'-diphosphate + ATP = a ribonucleoside 5'-triphosphate + ADP. Functionally, major role in the synthesis of nucleoside triphosphates other than ATP. The ATP gamma phosphate is transferred to the NDP beta phosphate via a ping-pong mechanism, using a phosphorylated active-site intermediate. The chain is Nucleoside diphosphate kinase from Agrobacterium fabrum (strain C58 / ATCC 33970) (Agrobacterium tumefaciens (strain C58)).